We begin with the raw amino-acid sequence, 174 residues long: Gamma-crystallin D (174 aa).

Beta/gamma crystallin 'Greek key' domains are found at residues 2-40 (GKITFYEDRGFQGRHYECSTDHSNLQPYFSRCNSVRVDS) and 41-83 (GCWM…RLIP). The connecting peptide stretch occupies residues 84-87 (HAGS). Beta/gamma crystallin 'Greek key' domains are found at residues 88–128 (HRIR…NVLE) and 129–171 (GCWV…RRVM).

Belongs to the beta/gamma-crystallin family. As to expression, detected in the superior olivary complex and fibers of the ventral aoustic stria of the auditory hindbrain.

In terms of biological role, crystallins are the dominant structural components of the vertebrate eye lens. This Rattus norvegicus (Rat) protein is Gamma-crystallin D (Crygd).